Consider the following 660-residue polypeptide: DNA polymerase alpha-associated DNA helicase A (660 aa).

232 to 239 (GPPGTGKT) contributes to the ATP binding site.

The protein belongs to the DNA2/NAM7 helicase family. Associates with the hexameric DNA polymerase alpha.

The protein resides in the cytoplasm. Its subcellular location is the nucleus. The catalysed reaction is ATP + H2O = ADP + phosphate + H(+). In terms of biological role, DNA polymerase alpha-associated DNA helicase which may be involved in DNA replication. This Schizosaccharomyces pombe (strain 972 / ATCC 24843) (Fission yeast) protein is DNA polymerase alpha-associated DNA helicase A (hcs1).